The following is a 304-amino-acid chain: HPr kinase/phosphorylase (304 aa).

Catalysis depends on residues histidine 136 and lysine 157. 151-158 (GESGIGKS) is an ATP binding site. Serine 158 contacts Mg(2+). Aspartate 175 acts as the Proton acceptor; for phosphorylation activity. Proton donor; for dephosphorylation activity in catalysis. The tract at residues 198–207 (LEVRGIGIID) is important for the catalytic mechanism of both phosphorylation and dephosphorylation. Glutamate 199 is a binding site for Mg(2+). Arginine 240 is an active-site residue. The segment at 261-266 (PVRPGR) is important for the catalytic mechanism of dephosphorylation.

It belongs to the HPrK/P family. Homohexamer. Mg(2+) is required as a cofactor.

It catalyses the reaction [HPr protein]-L-serine + ATP = [HPr protein]-O-phospho-L-serine + ADP + H(+). It carries out the reaction [HPr protein]-O-phospho-L-serine + phosphate + H(+) = [HPr protein]-L-serine + diphosphate. Functionally, catalyzes the ATP- as well as the pyrophosphate-dependent phosphorylation of a specific serine residue in HPr, a phosphocarrier protein of the phosphoenolpyruvate-dependent sugar phosphotransferase system (PTS). HprK/P also catalyzes the pyrophosphate-producing, inorganic phosphate-dependent dephosphorylation (phosphorolysis) of seryl-phosphorylated HPr (P-Ser-HPr). The two antagonistic activities of HprK/P are regulated by several intracellular metabolites, which change their concentration in response to the absence or presence of rapidly metabolisable carbon sources (glucose, fructose, etc.) in the growth medium. Therefore, by controlling the phosphorylation state of HPr, HPrK/P is a sensor enzyme that plays a major role in the regulation of carbon metabolism and sugar transport: it mediates carbon catabolite repression (CCR), and regulates PTS-catalyzed carbohydrate uptake and inducer exclusion. The protein is HPr kinase/phosphorylase of Clostridium botulinum (strain Eklund 17B / Type B).